Reading from the N-terminus, the 289-residue chain is Digeranylgeranylglyceryl phosphate synthase (289 aa).

The next 8 helical transmembrane spans lie at 18–38 (LMAGFAAAIGTLIAFNILISG), 47–67 (AFPFLDAGLVFLVVFLVSGAG), 99–119 (FYFSYLLFALGTLIAFSINSI), 120–140 (CGSIALFNSLLLILYAKTLKG), 163–183 (IFGFGGIKALSVLFLLAALAI), 218–238 (LAVLTGLLAVILSPLPYFMSV), 243–263 (YIYLVSLADLGFLAAIIQLLV), and 269–289 (KSSKLFKIAMFFALIAFIAGV).

The protein belongs to the UbiA prenyltransferase family. DGGGP synthase subfamily. Requires Mg(2+) as cofactor.

Its subcellular location is the cell membrane. It carries out the reaction sn-3-O-(geranylgeranyl)glycerol 1-phosphate + (2E,6E,10E)-geranylgeranyl diphosphate = 2,3-bis-O-(geranylgeranyl)-sn-glycerol 1-phosphate + diphosphate. The protein operates within membrane lipid metabolism; glycerophospholipid metabolism. Functionally, prenyltransferase that catalyzes the transfer of the geranylgeranyl moiety of geranylgeranyl diphosphate (GGPP) to the C2 hydroxyl of (S)-3-O-geranylgeranylglyceryl phosphate (GGGP). This reaction is the second ether-bond-formation step in the biosynthesis of archaeal membrane lipids. In Methanosarcina mazei (strain ATCC BAA-159 / DSM 3647 / Goe1 / Go1 / JCM 11833 / OCM 88) (Methanosarcina frisia), this protein is Digeranylgeranylglyceryl phosphate synthase.